We begin with the raw amino-acid sequence, 792 residues long: Probable CoA-transferase Rv1866 (792 aa).

Catalysis depends on D558, which acts as the Nucleophile.

This sequence belongs to the CoA-transferase III family.

Probable CoA-transferase. The protein is Probable CoA-transferase Rv1866 of Mycobacterium tuberculosis (strain ATCC 25618 / H37Rv).